The sequence spans 424 residues: Chloroquine resistance transporter (424 aa).

At 1 to 58 the chain is on the cytoplasmic side; sequence MKFASKKNNQKNSSKNDERYRELDNLVQEGNGSRLGGGSCLGKCAHVFKLIFKEIKDN. The helical transmembrane segment at 59–79 threads the bilayer; sequence IFIYILSIIYLSVCVMNKIFA. Residues 80 to 90 are Vacuolar-facing; sequence KRTLNKIGNYS. Asparagine 88 is a glycosylation site (N-linked (GlcNAc...) asparagine). A helical transmembrane segment spans residues 91–111; sequence FVTSETHNFICMIMFFIVYSL. Over 112-127 the chain is Cytoplasmic; it reads FGNKKGNSKERHRSFN. Residues 128–148 traverse the membrane as a helical segment; sequence LQFFAISMLDACSVILAFIGL. At 149–154 the chain is on the vacuolar side; that stretch reads TRTTGN. The helical transmembrane segment at 155 to 175 threads the bilayer; that stretch reads IQSFVLQLSIPINMFFCFLIL. Residues 176–178 are Cytoplasmic-facing; that stretch reads RYR. The chain crosses the membrane as a helical span at residues 179–199; sequence YHLYNYLGAVIIVVTIALVEM. The Vacuolar portion of the chain corresponds to 200–209; that stretch reads KLSFETQEEN. The helical transmembrane segment at 210–230 threads the bilayer; the sequence is SIIFNLVLISALIPVCFSNMT. Topologically, residues 231–248 are cytoplasmic; sequence REIVFKKYKIDILRLNAM. A helical membrane pass occupies residues 249–269; that stretch reads VSFFQLFTSCLILPVYTLPFL. Residues 270-317 are Vacuolar-facing; it reads KQLHLPYNEIWTNIKNGFACLFLGRNTVVENCGLGMAKLCDDCDGAWK. Disulfide bonds link cysteine 289-cysteine 312 and cysteine 301-cysteine 309. A helical membrane pass occupies residues 318–338; it reads TFALFSFFNICDNLITSYIID. Residues 339-346 are Cytoplasmic-facing; that stretch reads KFSTMTYT. Residues 347 to 367 traverse the membrane as a helical segment; it reads IVSCIQGPAIAIAYYFKFLAG. Over 368-377 the chain is Vacuolar; that stretch reads DVVREPRLLD. The helical transmembrane segment at 378–398 threads the bilayer; the sequence is FVTLFGYLFGSIIYRVGNIIL. Over 399–424 the chain is Cytoplasmic; it reads ERKKMRNEENEDSEGELTNVDSIITQ.

Belongs to the CRT-like transporter family. In terms of assembly, monomer.

It is found in the vacuole membrane. It catalyses the reaction L-arginine(in) = L-arginine(out). The catalysed reaction is L-lysine(in) = L-lysine(out). It carries out the reaction L-histidine(out) = L-histidine(in). The enzyme catalyses histamine(out) = histamine(in). It catalyses the reaction spermidine(in) = spermidine(out). The catalysed reaction is Fe(3+)(in) = Fe(3+)(out). It carries out the reaction Fe(2+)(in) = Fe(2+)(out). Transporter activity is trans-stimulated by host-derived peptides containing 4-11 amino acids. Trans-stimulation by hemoglobin-derived peptide VDPVNF is pH-dependent and sodium-independent. Saquinavir trans-stimulates transport of hemoglobin-derived peptide VDPVNF. Protons are non-competitive inhibitors of chloroquine transport. Functionally, nutrient transporter. Substrate transport is pH-dependent. Can transport arginine, lysine, histidine, peptides, histamine and spermidine. May modulate activity of endogenous transporters. Involved in maintaining the osmotic homeostasis of the digestive vacuole. Required for the asexual intraerythrocytic proliferation of parasites. Can transport Fe(2+) and Fe(3+). In Plasmodium falciparum, this protein is Chloroquine resistance transporter.